The chain runs to 129 residues: Glycine cleavage system H protein (129 aa).

The Lipoyl-binding domain occupies 24–106; it reads TYTVGITEHA…YGQGWIFKIK (83 aa). At Lys-65 the chain carries N6-lipoyllysine.

It belongs to the GcvH family. In terms of assembly, the glycine cleavage system is composed of four proteins: P, T, L and H. It depends on (R)-lipoate as a cofactor.

In terms of biological role, the glycine cleavage system catalyzes the degradation of glycine. The H protein shuttles the methylamine group of glycine from the P protein to the T protein. The polypeptide is Glycine cleavage system H protein (Cronobacter sakazakii (strain ATCC BAA-894) (Enterobacter sakazakii)).